The chain runs to 198 residues: Type 1 fimbriae regulatory protein FimE (198 aa).

Residues 2 to 184 form the Tyr recombinase domain; sequence SKRRYLTGKE…NAARFAGLWE (183 aa). Active-site residues include Arg41, Lys66, His136, Arg139, and His162. The O-(3'-phospho-DNA)-tyrosine intermediate role is filled by Tyr171.

This sequence belongs to the 'phage' integrase family.

Functionally, fimE is one of the 2 regulatory proteins which control the phase variation of type 1 fimbriae in E.coli. These proteins mediate the periodic inversion of a 300bp DNA segment that harbors the promoter for the fimbrial structural gene, fimA. FimE switches fimA off. This Escherichia coli O6:H1 (strain CFT073 / ATCC 700928 / UPEC) protein is Type 1 fimbriae regulatory protein FimE (fimE).